The sequence spans 143 residues: Small ribosomal subunit protein uS12 (143 aa).

It belongs to the universal ribosomal protein uS12 family. As to quaternary structure, component of the 40S small ribosomal subunit.

Its subcellular location is the cytoplasm. The protein localises to the cytosol. It localises to the rough endoplasmic reticulum. This chain is Small ribosomal subunit protein uS12 (rps23), found in Gillichthys mirabilis (Long-jawed mudsucker).